The chain runs to 314 residues: N-acyl-aromatic-L-amino acid amidohydrolase (carboxylate-forming) B (314 aa).

Zn(2+)-binding residues include histidine 19 and glutamate 22. Residues arginine 63 and 70-71 contribute to the substrate site; that span reads NR. Position 116 (histidine 116) interacts with Zn(2+). Glutamate 178 and tyrosine 289 together coordinate substrate.

It belongs to the AspA/AstE family. Aspartoacylase subfamily. As to quaternary structure, homotetramer. Zn(2+) serves as cofactor.

The protein localises to the apical cell membrane. It localises to the cytoplasm. The catalysed reaction is an N-acyl-aromatic L-alpha-amino acid + H2O = an aromatic L-alpha-amino acid + a carboxylate. It carries out the reaction an N-acetyl-L-cysteine-S-conjugate + H2O = an S-substituted L-cysteine + acetate. Functionally, plays an important role in deacetylating mercapturic acids in kidney proximal tubules. The chain is N-acyl-aromatic-L-amino acid amidohydrolase (carboxylate-forming) B (acy3.2) from Danio rerio (Zebrafish).